We begin with the raw amino-acid sequence, 503 residues long: ATP synthase subunit alpha (503 aa).

170 to 177 (GDRQTGKT) provides a ligand contact to ATP.

The protein belongs to the ATPase alpha/beta chains family. In terms of assembly, F-type ATPases have 2 components, CF(1) - the catalytic core - and CF(0) - the membrane proton channel. CF(1) has five subunits: alpha(3), beta(3), gamma(1), delta(1), epsilon(1). CF(0) has three main subunits: a(1), b(2) and c(9-12). The alpha and beta chains form an alternating ring which encloses part of the gamma chain. CF(1) is attached to CF(0) by a central stalk formed by the gamma and epsilon chains, while a peripheral stalk is formed by the delta and b chains.

Its subcellular location is the cell inner membrane. The enzyme catalyses ATP + H2O + 4 H(+)(in) = ADP + phosphate + 5 H(+)(out). Functionally, produces ATP from ADP in the presence of a proton gradient across the membrane. The alpha chain is a regulatory subunit. In Geobacter sulfurreducens (strain ATCC 51573 / DSM 12127 / PCA), this protein is ATP synthase subunit alpha.